The primary structure comprises 363 residues: S-methylmethionine--homocysteine S-methyltransferase BHMT2 (363 aa).

The 295-residue stretch at 11-305 (RGILERLESG…YHIRAIAEEL (295 aa)) folds into the Hcy-binding domain. Residues Cys208, Cys290, and Cys291 each contribute to the Zn(2+) site. The residue at position 321 (Ser321) is a Phosphoserine.

As to quaternary structure, homotetramer. Requires Zn(2+) as cofactor.

The catalysed reaction is S-methyl-L-methionine + L-homocysteine = 2 L-methionine + H(+). It participates in amino-acid biosynthesis; L-methionine biosynthesis via de novo pathway; L-methionine from L-homocysteine (BhmT route): step 1/1. Involved in the regulation of homocysteine metabolism. Converts betaine and homocysteine to dimethylglycine and methionine, respectively. This reaction is also required for the irreversible oxidation of choline. This chain is S-methylmethionine--homocysteine S-methyltransferase BHMT2 (BHMT2), found in Pongo abelii (Sumatran orangutan).